We begin with the raw amino-acid sequence, 260 residues long: NH(3)-dependent NAD(+) synthetase (260 aa).

Residue 31–38 (GLSGGLDS) participates in ATP binding. Asp37 provides a ligand contact to Mg(2+). Arg112 is a binding site for deamido-NAD(+). Thr132 contacts ATP. Glu137 contacts Mg(2+). Positions 161 and 183 each coordinate ATP.

This sequence belongs to the NAD synthetase family. In terms of assembly, homodimer.

It carries out the reaction deamido-NAD(+) + NH4(+) + ATP = AMP + diphosphate + NAD(+) + H(+). It participates in cofactor biosynthesis; NAD(+) biosynthesis; NAD(+) from deamido-NAD(+) (ammonia route): step 1/1. Its function is as follows. Catalyzes the ATP-dependent amidation of deamido-NAD to form NAD. Uses ammonia as a nitrogen source. The chain is NH(3)-dependent NAD(+) synthetase from Helicobacter pylori (strain ATCC 700392 / 26695) (Campylobacter pylori).